The sequence spans 326 residues: 4-hydroxythreonine-4-phosphate dehydrogenase (326 aa).

Residues H132 and T133 each contribute to the substrate site. A divalent metal cation-binding residues include H162, H207, and H262. 3 residues coordinate substrate: K270, N279, and R288.

This sequence belongs to the PdxA family. In terms of assembly, homodimer. Zn(2+) serves as cofactor. It depends on Mg(2+) as a cofactor. The cofactor is Co(2+).

It is found in the cytoplasm. It catalyses the reaction 4-(phosphooxy)-L-threonine + NAD(+) = 3-amino-2-oxopropyl phosphate + CO2 + NADH. The protein operates within cofactor biosynthesis; pyridoxine 5'-phosphate biosynthesis; pyridoxine 5'-phosphate from D-erythrose 4-phosphate: step 4/5. In terms of biological role, catalyzes the NAD(P)-dependent oxidation of 4-(phosphooxy)-L-threonine (HTP) into 2-amino-3-oxo-4-(phosphooxy)butyric acid which spontaneously decarboxylates to form 3-amino-2-oxopropyl phosphate (AHAP). The sequence is that of 4-hydroxythreonine-4-phosphate dehydrogenase from Ruegeria sp. (strain TM1040) (Silicibacter sp.).